A 355-amino-acid polypeptide reads, in one-letter code: Uroporphyrinogen decarboxylase (355 aa).

Substrate contacts are provided by residues 27 to 31 (RQAGR), aspartate 77, tyrosine 154, threonine 209, and histidine 328.

This sequence belongs to the uroporphyrinogen decarboxylase family. As to quaternary structure, homodimer.

It localises to the cytoplasm. It catalyses the reaction uroporphyrinogen III + 4 H(+) = coproporphyrinogen III + 4 CO2. Its pathway is porphyrin-containing compound metabolism; protoporphyrin-IX biosynthesis; coproporphyrinogen-III from 5-aminolevulinate: step 4/4. Its function is as follows. Catalyzes the decarboxylation of four acetate groups of uroporphyrinogen-III to yield coproporphyrinogen-III. The chain is Uroporphyrinogen decarboxylase from Photobacterium profundum (strain SS9).